The primary structure comprises 185 residues: Ribonuclease HII (185 aa).

Residues 1-185 (MIILGIDEAG…KSYKPIQLLL (185 aa)) form the RNase H type-2 domain. Positions 7, 8, and 99 each coordinate a divalent metal cation.

Belongs to the RNase HII family. It depends on Mn(2+) as a cofactor. Mg(2+) serves as cofactor.

It localises to the cytoplasm. The catalysed reaction is Endonucleolytic cleavage to 5'-phosphomonoester.. Functionally, endonuclease that specifically degrades the RNA of RNA-DNA hybrids. In Francisella philomiragia subsp. philomiragia (strain ATCC 25017 / CCUG 19701 / FSC 153 / O#319-036), this protein is Ribonuclease HII.